Here is an 847-residue protein sequence, read N- to C-terminus: Beta-hexosaminidase (847 aa).

Cystine bridges form between Cys-31–Cys-40, Cys-377–Cys-385, and Cys-484–Cys-530. Glu-519 serves as the catalytic Proton donor.

It belongs to the glycosyl hydrolase 20 family.

The enzyme catalyses Hydrolysis of terminal non-reducing N-acetyl-D-hexosamine residues in N-acetyl-beta-D-hexosaminides.. Its pathway is glycan degradation; chitin degradation. In terms of biological role, hydrolysis of terminal, non-reducing N-acetyl-beta-D-glucosamine residues in chitobiose and higher analogs, and in glycoproteins. The protein is Beta-hexosaminidase (hex) of Vibrio vulnificus.